We begin with the raw amino-acid sequence, 117 residues long: Large ribosomal subunit protein bL19 (117 aa).

It belongs to the bacterial ribosomal protein bL19 family.

In terms of biological role, this protein is located at the 30S-50S ribosomal subunit interface and may play a role in the structure and function of the aminoacyl-tRNA binding site. This Azobacteroides pseudotrichonymphae genomovar. CFP2 protein is Large ribosomal subunit protein bL19.